The chain runs to 1322 residues: Transcription elongation factor SPT6-like (1322 aa).

Over residues 1–17 the composition is skewed to basic and acidic residues; sequence MNRIDEEPQIHEDPVEN. 2 disordered regions span residues 1-65 and 90-113; these read MNRI…KKDE and KRLKKSSEEEDKINNDDDDDDLSH. Positions 18–33 are enriched in acidic residues; sequence REEDDEDEDDQYEFDD. The span at 48–65 shows a compositional bias: basic and acidic residues; the sequence is EQRHCSEKKSRSRRKKDE. Acidic residues predominate over residues 97–110; that stretch reads EEEDKINNDDDDDD. Residues 1017 to 1088 enclose the S1 motif domain; sequence GRIVQATVKK…QRYHVLLVCK (72 aa).

Belongs to the SPT6 family.

It is found in the nucleus. Transcription elongation factor that enhances the transcription elongation by RNA polymerase II (RNAPII). This is Transcription elongation factor SPT6-like from Arabidopsis thaliana (Mouse-ear cress).